Reading from the N-terminus, the 434-residue chain is RNA polymerase II holoenzyme cyclin-like subunit (434 aa).

The Cyclin N-terminal domain occupies Glu23 to Leu155. A compositionally biased stretch (low complexity) spans Gly248–Thr278. Disordered regions lie at residues Gly248–Glu292, Leu301–Asn320, and Gln330–Ser362. Positions Gln330–Gly359 are enriched in low complexity.

Belongs to the cyclin family. Cyclin C subfamily. In terms of assembly, component of the SRB8-11 complex, a regulatory module of the Mediator complex.

It is found in the nucleus. Its function is as follows. Component of the SRB8-11 complex. The SRB8-11 complex is a regulatory module of the Mediator complex which is itself involved in regulation of basal and activated RNA polymerase II-dependent transcription. The SRB8-11 complex may be involved in the transcriptional repression of a subset of genes regulated by Mediator. It may inhibit the association of the Mediator complex with RNA polymerase II to form the holoenzyme complex. The SRB8-11 complex phosphorylates the C-terminal domain (CTD) of the largest subunit of RNA polymerase II. The polypeptide is RNA polymerase II holoenzyme cyclin-like subunit (SSN8) (Candida albicans (strain SC5314 / ATCC MYA-2876) (Yeast)).